The sequence spans 983 residues: Pro-apoptotic serine protease NMA111 (983 aa).

Residues 1–40 form a disordered region; the sequence is MSVPTKRRLSFDESTNKRFLNGTHSTENNTSNIEVDEDYG. A compositionally biased stretch (polar residues) spans 22–33; sequence GTHSTENNTSNI. Residues 59–260 are serine protease; the sequence is WQETITKVVN…LPIYRPLRAL (202 aa). Catalysis depends on charge relay system residues H108, D139, and S222. PDZ domains are found at residues 287 to 365 and 867 to 948; these read RRLG…QRGG and FWSG…MSFD.

This sequence belongs to the peptidase S1C family.

The protein resides in the nucleus. Nuclear serine protease which mediates apoptosis. This Scheffersomyces stipitis (strain ATCC 58785 / CBS 6054 / NBRC 10063 / NRRL Y-11545) (Yeast) protein is Pro-apoptotic serine protease NMA111 (NMA111).